The chain runs to 255 residues: MTSILVSRFLIAALVLQYATSDAVNYCRLPCRGCDYHVGCGEPAYAQECGQSPRTRELLKEHRNEILSKINDVRDHVAKGSWGLPMAARMKVVVWDAELAGLAKRHTKGCVGETHACRNTERFWLPGQLNFKYSGDKLPRIRELIDDAVKKGHLQKHNITREFIENYRENGPNGNVKGLALAISDRVTAVGCGLTTWEDGAKARALLTCNFSSQNIRGRPVYKIGNSPGEKCIEKDETYKNLCSATEPIDPNKSN.

An N-terminal signal peptide occupies residues Met1–Ala23. An SCP domain is found at Leu67–Phe211.

It belongs to the CRISP family. In terms of tissue distribution, expressed in salivary glands.

The protein localises to the secreted. In terms of biological role, inhibits platelet aggregation induced by all agonists tested. May act by competing with fibrinogen for binding to glycoprotein IIb/IIIa (ITGA2B/ITGB3). This is Tabinhibitin 1 from Tabanus yao (Horsefly).